The sequence spans 132 residues: Transcription antitermination protein NusB (132 aa).

The protein belongs to the NusB family.

In terms of biological role, involved in transcription antitermination. Required for transcription of ribosomal RNA (rRNA) genes. Binds specifically to the boxA antiterminator sequence of the ribosomal RNA (rrn) operons. The protein is Transcription antitermination protein NusB of Campylobacter jejuni subsp. jejuni serotype O:2 (strain ATCC 700819 / NCTC 11168).